Consider the following 279-residue polypeptide: Phycobilisome 34.5 kDa linker polypeptide, phycoerythrocyanin-associated, rod (279 aa).

Residues serine 2–asparagine 178 enclose the PBS-linker domain. Positions alanine 226–alanine 278 constitute a CpcD-like domain.

Belongs to the phycobilisome linker protein family.

It is found in the cellular thylakoid membrane. Rod linker protein, associated with phycoerythrocyanin. Linker polypeptides determine the state of aggregation and the location of the disk-shaped phycobiliprotein units within the phycobilisome and modulate their spectroscopic properties in order to mediate a directed and optimal energy transfer. In Mastigocladus laminosus (Fischerella sp.), this protein is Phycobilisome 34.5 kDa linker polypeptide, phycoerythrocyanin-associated, rod (pecC).